We begin with the raw amino-acid sequence, 426 residues long: uncharacterized protein (426 aa).

Solcar repeat units lie at residues 125–216, 226–315, and 334–422; these read KNNV…MKRV, HSPL…LKRT, and PNGL…CKKW. Helical transmembrane passes span 130 to 151, 193 to 213, 229 to 249, 290 to 310, 336 to 356, and 394 to 415; these read YFISGGIAGIVSRTCTAPLDRL, GINVLKVMPESSIKFGTYEAM, LYSYLAGGMAGSVAQMFIYPV, GVLVGILGMFPYSATDLGTFE, GLVMAFGALSGSTGATIVFPL, and LYKGLSPNLLKVAPSVAISYLV.

It belongs to the mitochondrial carrier (TC 2.A.29) family.

The protein localises to the mitochondrion inner membrane. This is an uncharacterized protein from Schizosaccharomyces pombe (strain 972 / ATCC 24843) (Fission yeast).